A 683-amino-acid polypeptide reads, in one-letter code: Stromal interaction molecule 1 (683 aa).

The signal sequence occupies residues Met-1–Ser-22. The Extracellular portion of the chain corresponds to Leu-23–Asp-211. 2 EF-hand domains span residues Ser-62 to Asn-95 and Thr-100 to Ser-124. Ca(2+) is bound by residues Asp-74, Asp-76, Asn-78, Asp-80, and Glu-85. N-linked (GlcNAc...) asparagine glycans are attached at residues Asn-129 and Asn-169. The region spanning Trp-130–Phe-198 is the SAM domain. A helical membrane pass occupies residues Phe-212–Asn-232. Residues Arg-233–Lys-683 are Cytoplasmic-facing. The stretch at Leu-246–Val-440 forms a coiled coil. Position 255 is a phosphoserine (Ser-255). Residues Pro-342–Val-440 are SOAR/CAD. The contributes to fast Ca(2+)-dependent inactivation of CRAC channels stretch occupies residues Asp-473–Glu-481. A compositionally biased stretch (low complexity) spans Met-488 to Val-497. A disordered region spans residues Met-488–Pro-535. The residue at position 502 (Thr-502) is a Phosphothreonine. Ser-510 carries the phosphoserine modification. The segment covering Asp-513 to Arg-530 has biased composition (basic and acidic residues). Thr-515 carries the phosphothreonine modification. 9 positions are modified to phosphoserine: Ser-517, Ser-519, Ser-521, Ser-522, Ser-565, Ser-573, Ser-606, Ser-616, and Ser-626. The interval Leu-597–Lys-683 is disordered. The Microtubule tip localization signal motif lies at Thr-640–Pro-643. The span at Glu-653–Asp-664 shows a compositional bias: acidic residues. Ser-658 carries the phosphoserine modification. A Phosphothreonine modification is found at Thr-663. At Ser-666 the chain carries Phosphoserine. Over residues Gly-668 to Lys-683 the composition is skewed to basic residues. Positions Lys-670 to Lys-683 are required for generation of inwardly rectifying CRAC currents.

Monomer in the presence of Ca(2+). It oligomerizes in absence of Ca(2+). Forms homooligomers and heterooligomers with STIM2. Interacts with pore-forming subunits of CRAC channels, ORAI1, ORAI2 and ORAI3; this interaction is potentiated upon Ca(2+) store depletion. Interacts (via the transmembrane region and the SOAR/CAD domain) with SPPL3; the interaction promotes the binding of STIM1 to ORAI1. Interacts with ORAI1. Interacts with MAPRE1; probably required for targeting to the growing microtubule plus ends. Interacts with CRACR2A/EFCAB4B; the interaction is direct and takes place in absence of Ca(2+). Forms a complex with CRACR2A/EFCAB4B and ORAI1 at low concentration of Ca(2+), the complex dissociates at elevated Ca(2+) concentrations. Interacts with SARAF, promoting a slow inactivation of STIM1-dependent SOCE activity, possibly by facilitating the deoligomerization of STIM1. Interacts with EFHB; the interaction takes place upon Ca(2+)-store depletion and inhibits the association with SARAF. Interacts with ASPH. Interacts with SLC35G1; intracellular Ca(2+)-dependent. May interact with ATP1A1, ATP2A2, ATP2B1, ATP2B4, KPNB1 and XPO1; through SLC35G1. Interacts with TMEM203. Interacts with STIMATE, promoting STIM1 conformational switch. Interacts with TMEM178A. Interacts with CASQ1 (via C-terminal end and preferentially with the monomeric form); this interaction increases in response to a depletion of intracellular calcium, decreases both STIM1 aggregation and clustering, interaction of STIM1 with ORAI1 and store-operated Ca(2+) entry (SOCE) activity. Glycosylation is required for cell surface expression. In terms of processing, phosphorylated predominantly on Ser residues.

The protein resides in the cell membrane. It localises to the endoplasmic reticulum membrane. The protein localises to the sarcoplasmic reticulum. Its subcellular location is the cytoplasm. It is found in the cytoskeleton. In terms of biological role, acts as a Ca(2+) sensor that gates two major inward rectifying Ca(2+) channels at the plasma membrane: Ca(2+) release-activated Ca(2+) (CRAC) channels and arachidonate-regulated Ca(2+)-selective (ARC) channels. Plays a role in mediating store-operated Ca(2+) entry (SOCE), a Ca(2+) influx following depletion of intracellular Ca(2+) stores. Upon Ca(2+) depletion, translocates from the endoplasmic reticulum to the plasma membrane where it activates CRAC channel pore-forming subunits ORA1, ORA2 and ORAI3 to generate sustained and oscillatory Ca(2+) entry. Involved in enamel formation. The polypeptide is Stromal interaction molecule 1 (STIM1) (Bos taurus (Bovine)).